Consider the following 147-residue polypeptide: MKILLIKDVKSLGKAGEVKEVKDGYANNFLIAKGFAKAATTEVLRRYESQKQKEAEDERYEIESLKTLSNTLKGVRVKIAKQVGSNNALFGSVTKDDVANALKEQKNIEIDKKLIELPQTKTIGIYDVNLKLKFGVTAKFEIEVVGE.

The protein belongs to the bacterial ribosomal protein bL9 family.

Functionally, binds to the 23S rRNA. The sequence is that of Large ribosomal subunit protein bL9 from Campylobacter hominis (strain ATCC BAA-381 / DSM 21671 / CCUG 45161 / LMG 19568 / NCTC 13146 / CH001A).